Here is a 483-residue protein sequence, read N- to C-terminus: Septin-8 (483 aa).

Basic and acidic residues predominate over residues 1 to 16 (MAATDLERFSNAEPEP). Residues 1-22 (MAATDLERFSNAEPEPRSLSLG) form a disordered region. Ala2 bears the N-acetylalanine mark. Position 10 is a phosphoserine (Ser10). Residues 41–307 (QGFSFNILCV…ELYRRCKLEE (267 aa)) enclose the Septin-type G domain. The segment at 51-58 (GETGIGKS) is G1 motif. Residues 51 to 58 (GETGIGKS), Gly106, 187 to 195 (KADTISKSE), Gly241, and Arg256 contribute to the GTP site. The segment at 103-106 (DAVG) is G3 motif. The segment at 186-189 (AKAD) is G4 motif. Residues 320-413 (FSLQETYEAK…AVEALQSQAL (94 aa)) adopt a coiled-coil conformation. The segment covering 411 to 420 (QALHATSQQP) has biased composition (polar residues). Residues 411–443 (QALHATSQQPLRKDKDKKNRSDIGAHQPGMSLS) are disordered. Basic and acidic residues predominate over residues 421–433 (LRKDKDKKNRSDI).

It belongs to the TRAFAC class TrmE-Era-EngA-EngB-Septin-like GTPase superfamily. Septin GTPase family. Septins polymerize into heterooligomeric protein complexes that form filaments, and can associate with cellular membranes, actin filaments and microtubules. GTPase activity is required for filament formation. Interacts with CDK14. Interacts with SEPTIN5. Interacts with SEPTIN7. Interacts with SEPTIN4. Interacts with VAMP2; the interaction inhibits interaction of VAMP2 with SYP. Interacts with STX1A. As to expression, widely expressed, including in brain, heart and platelets; most abundant in aorta. Isoform 2 is expressed at low levels in specific brain areas, such as occipital pole, frontal lobe, temporal lobe and putamen. Isoform 1 and 3 are highly expressed in specific brain areas, such as occipital pole, frontal lobe, temporal lobe and putamen. Isoform 2 is highly expressed in prostate, testis and ovary. Isoform 1 and isoform 3 are expressed at low levels in prostate, testis and ovary.

The protein resides in the cytoplasm. Its subcellular location is the cytoskeleton. It localises to the synapse. The protein localises to the cell projection. It is found in the axon. The protein resides in the cytoplasmic vesicle. Its subcellular location is the secretory vesicle. It localises to the synaptic vesicle membrane. The protein localises to the presynapse. In terms of biological role, filament-forming cytoskeletal GTPase. May play a role in platelet secretion. Seems to participate in the process of SNARE complex formation in synaptic vesicles. Its function is as follows. Stabilizes BACE1 protein levels and promotes the sorting and accumulation of BACE1 to the recycling or endosomal compartments, modulating the beta-amyloidogenic processing of APP. The protein is Septin-8 of Homo sapiens (Human).